Here is a 147-residue protein sequence, read N- to C-terminus: UPF0306 protein YhbP (147 aa).

The protein belongs to the UPF0306 family.

In Shigella dysenteriae serotype 1 (strain Sd197), this protein is UPF0306 protein YhbP.